The sequence spans 1669 residues: Collagen alpha-3(IV) chain (1669 aa).

The N-terminal stretch at Met-1–Ser-28 is a signal peptide. The 7S domain stretch occupies residues Lys-29–Ala-42. Residues Gly-43–Pro-1436 are triple-helical region. Disordered stretches follow at residues Thr-44–Ser-473 and Pro-500–Gly-1439. A compositionally biased stretch (low complexity) spans Pro-54–Pro-68. Residues Pro-105–Pro-114 show a composition bias toward pro residues. Asn-126 carries an N-linked (GlcNAc...) asparagine glycan. The segment covering Pro-188–Pro-200 has biased composition (pro residues). Residues Phe-202 to Pro-211 show a composition bias toward low complexity. Asn-253 carries N-linked (GlcNAc...) asparagine glycosylation. Positions Ser-255–Glu-269 are enriched in basic and acidic residues. Composition is skewed to low complexity over residues Pro-279–Pro-290 and Ser-382–Pro-393. The span at Pro-416–Cys-437 shows a compositional bias: pro residues. Low complexity predominate over residues Asn-551–Leu-560. Pro residues-rich tracts occupy residues Pro-596–Tyr-617 and Leu-654–Gln-665. A compositionally biased stretch (low complexity) spans Ala-666–Gly-684. Gly residues predominate over residues Gly-778–Gly-787. A Cell attachment site motif is present at residues Arg-830 to Asp-832. Residues Cys-861 to Ala-876 are compositionally biased toward low complexity. A compositionally biased stretch (basic and acidic residues) spans Lys-922–Lys-939. The segment covering Arg-970–Pro-985 has biased composition (low complexity). The short motif at Arg-994–Asp-996 is the Cell attachment site element. Residues Ser-1092–Ser-1103 show a composition bias toward low complexity. Residues Pro-1128 to Pro-1146 are compositionally biased toward pro residues. A Cell attachment site motif is present at residues Arg-1152–Asp-1154. Over residues Pro-1228–Pro-1248 the composition is skewed to low complexity. Residues Glu-1250 to Pro-1259 show a composition bias toward pro residues. The short motif at Arg-1304–Asp-1306 is the Cell attachment site element. A compositionally biased stretch (pro residues) spans Pro-1333–Arg-1343. Composition is skewed to low complexity over residues Gln-1366–Pro-1379 and Pro-1402–Asn-1429. Residues Gly-1425–Arg-1443 are epitope recognized by Goodpasture antibodies. Residues Gly-1444 to Arg-1668 enclose the Collagen IV NC1 domain. 6 disulfide bridges follow: Cys-1459-Cys-1550, Cys-1492-Cys-1547, Cys-1504-Cys-1510, Cys-1569-Cys-1664, Cys-1603-Cys-1661, and Cys-1615-Cys-1621. A required for the anti-angiogenic activity of tumstatin region spans residues Asn-1478–Ala-1556. Met-1532 participates in a covalent cross-link: S-Lysyl-methionine sulfilimine (Met-Lys) (interchain with K-1650). Residues Ala-1609–Ser-1627 are required for the anti-tumor cell activity of tumstatin. Lys-1650 is covalently cross-linked (S-Lysyl-methionine sulfilimine (Lys-Met) (interchain with M-1532)).

Belongs to the type IV collagen family. In terms of assembly, there are six type IV collagen isoforms, alpha 1(IV)-alpha 6(IV), each of which can form a triple helix structure with 2 other chains to generate type IV collagen network. The alpha 3(IV) chain forms a triple helical protomer with alpha 4(IV) and alpha 5(IV); this triple helical structure dimerizes through NC1-NC1 domain interactions such that the alpha 3(IV), alpha 4(IV) and alpha 5(IV) chains of one protomer connect with the alpha 5(IV), alpha 4(IV) and alpha 3(IV) chains of the opposite promoter, respectively. Interacts with ITGB3. Associates with LAMB2 at the neuromuscular junction and in GBM. Post-translationally, prolines at the third position of the tripeptide repeating unit (G-X-Y) are hydroxylated in some or all of the chains. In terms of processing, type IV collagens contain numerous cysteine residues which are involved in inter- and intramolecular disulfide bonding. 12 of these, located in the NC1 domain, are conserved in all known type IV collagens. The trimeric structure of the NC1 domains is stabilized by covalent bonds between Lys and Met residues. Post-translationally, phosphorylated. Thought to be phosphorylated by CERT, but CERT does not have kinase activity. In terms of tissue distribution, highly expressed in kidney and lung. Detected at lower levels in heart, muscle and skin.

Its subcellular location is the secreted. The protein resides in the extracellular space. It is found in the extracellular matrix. It localises to the basement membrane. Functionally, type IV collagen is the major structural component of glomerular basement membranes (GBM), forming a 'chicken-wire' meshwork together with laminins, proteoglycans and entactin/nidogen. In terms of biological role, tumstatin, a cleavage fragment corresponding to the collagen alpha 3(IV) NC1 domain, possesses both anti-angiogenic and anti-tumor cell activity; these two anti-tumor properties may be regulated via RGD-independent ITGB3-mediated mechanisms. The sequence is that of Collagen alpha-3(IV) chain from Mus musculus (Mouse).